We begin with the raw amino-acid sequence, 59 residues long: Large ribosomal subunit protein bL32 (59 aa).

The segment at 1–24 (MAVQQNKKSPSKRGMHRSHDFLTS) is disordered.

Belongs to the bacterial ribosomal protein bL32 family.

The polypeptide is Large ribosomal subunit protein bL32 (Ralstonia nicotianae (strain ATCC BAA-1114 / GMI1000) (Ralstonia solanacearum)).